A 434-amino-acid chain; its full sequence is Isocitrate lyase (434 aa).

91–93 (SGW) contributes to the substrate binding site. Aspartate 157 contributes to the Mg(2+) binding site. Cysteine 195 acts as the Proton acceptor in catalysis. Residues 196 to 197 (GH), arginine 232, 317 to 321 (NCSPS), and threonine 351 contribute to the substrate site.

This sequence belongs to the isocitrate lyase/PEP mutase superfamily. Isocitrate lyase family. As to quaternary structure, homotetramer. Mg(2+) is required as a cofactor.

It catalyses the reaction D-threo-isocitrate = glyoxylate + succinate. It functions in the pathway carbohydrate metabolism; glyoxylate cycle; (S)-malate from isocitrate: step 1/2. Functionally, involved in the metabolic adaptation in response to environmental changes. Catalyzes the reversible formation of succinate and glyoxylate from isocitrate, a key step of the glyoxylate cycle, which operates as an anaplerotic route for replenishing the tricarboxylic acid cycle during growth on fatty acid substrates. This chain is Isocitrate lyase (aceA), found in Salmonella typhimurium (strain LT2 / SGSC1412 / ATCC 700720).